Reading from the N-terminus, the 345-residue chain is D-alanine--D-alanine ligase (345 aa).

The 206-residue stretch at 137-342 (KAAFSAAGLP…LEELVHQLLE (206 aa)) folds into the ATP-grasp domain. 169-224 (ETQLGYPCFIKPANLGSSVGISKATNRSELQAGLDLAASHDSRLLVEKGLQVRELE) contacts ATP. Mg(2+) is bound by residues Asp-295, Glu-309, and Asn-311.

Belongs to the D-alanine--D-alanine ligase family. It depends on Mg(2+) as a cofactor. The cofactor is Mn(2+).

The protein resides in the cytoplasm. The catalysed reaction is 2 D-alanine + ATP = D-alanyl-D-alanine + ADP + phosphate + H(+). It functions in the pathway cell wall biogenesis; peptidoglycan biosynthesis. Functionally, cell wall formation. This is D-alanine--D-alanine ligase from Synechococcus sp. (strain RCC307).